We begin with the raw amino-acid sequence, 234 residues long: Phosphoribosylaminoimidazole-succinocarboxamide synthase (234 aa).

This sequence belongs to the SAICAR synthetase family.

The catalysed reaction is 5-amino-1-(5-phospho-D-ribosyl)imidazole-4-carboxylate + L-aspartate + ATP = (2S)-2-[5-amino-1-(5-phospho-beta-D-ribosyl)imidazole-4-carboxamido]succinate + ADP + phosphate + 2 H(+). It participates in purine metabolism; IMP biosynthesis via de novo pathway; 5-amino-1-(5-phospho-D-ribosyl)imidazole-4-carboxamide from 5-amino-1-(5-phospho-D-ribosyl)imidazole-4-carboxylate: step 1/2. This Streptococcus pyogenes serotype M3 (strain ATCC BAA-595 / MGAS315) protein is Phosphoribosylaminoimidazole-succinocarboxamide synthase.